The sequence spans 353 residues: THUMP domain-containing protein 1 (353 aa).

The segment covering 1–10 (MAAPAQQTTQ) has biased composition (polar residues). Disordered stretches follow at residues 1–20 (MAAP…KGKA) and 73–96 (YGPE…DDAE). Ala-2 bears the N-acetylalanine mark. Phosphothreonine is present on Thr-79. A phosphoserine mark is found at Ser-86, Ser-88, and Ser-119. The THUMP domain maps to 147-254 (DMYKTKKKKT…KAVCCLSVVK (108 aa)). Ser-270 is modified (phosphoserine). Positions 270–353 (SPKDPSQLNS…GSKSNENDFS (84 aa)) are disordered. The span at 273–282 (DPSQLNSKQG) shows a compositional bias: polar residues. Over residues 283–296 (NGKEAKLESADKSD) the composition is skewed to basic and acidic residues. The segment covering 297–327 (QNNTAEGKNNQQVPENTEELGQTKPTSNPQV) has biased composition (polar residues).

It belongs to the THUMPD1 family. In terms of assembly, interacts with NAT10. Binds tRNA.

Functionally, functions as a tRNA-binding adapter to mediate NAT10-dependent tRNA acetylation modifying cytidine to N4-acetylcytidine (ac4C). The polypeptide is THUMP domain-containing protein 1 (THUMPD1) (Homo sapiens (Human)).